A 309-amino-acid polypeptide reads, in one-letter code: Porphobilinogen deaminase (309 aa).

Position 240 is an S-(dipyrrolylmethanemethyl)cysteine (C240).

The protein belongs to the HMBS family. As to quaternary structure, monomer. The cofactor is dipyrromethane.

It carries out the reaction 4 porphobilinogen + H2O = hydroxymethylbilane + 4 NH4(+). It functions in the pathway porphyrin-containing compound metabolism; protoporphyrin-IX biosynthesis; coproporphyrinogen-III from 5-aminolevulinate: step 2/4. Its function is as follows. Tetrapolymerization of the monopyrrole PBG into the hydroxymethylbilane pre-uroporphyrinogen in several discrete steps. This is Porphobilinogen deaminase from Lawsonia intracellularis (strain PHE/MN1-00).